The primary structure comprises 252 residues: UPF0246 protein LJ_0535 (252 aa).

It belongs to the UPF0246 family.

The chain is UPF0246 protein LJ_0535 from Lactobacillus johnsonii (strain CNCM I-12250 / La1 / NCC 533).